A 202-amino-acid chain; its full sequence is MLKLTPRQAEILAFIKRCLEDNGFPPTRAEIAQELGFKSPNAAEEHLKALARKGAIEMTPGASRGIRIPGLEAKAEEAGLPIIGRVAAGAPILAEQHIEQSCNINPAFFHPQADYLLRVHGMSMKDVGIFDGDLLAVHTCREARNGQIVVARIGDEVTVKRFKREGSKVWLLAENPEFAPIEVDLKEQELVIEGLSVGVIRR.

Positions 28-48 (RAEIAQELGFKSPNAAEEHLK) form a DNA-binding region, H-T-H motif. Catalysis depends on for autocatalytic cleavage activity residues serine 123 and lysine 160.

Belongs to the peptidase S24 family. In terms of assembly, homodimer.

The enzyme catalyses Hydrolysis of Ala-|-Gly bond in repressor LexA.. Functionally, represses a number of genes involved in the response to DNA damage (SOS response), including recA and lexA. In the presence of single-stranded DNA, RecA interacts with LexA causing an autocatalytic cleavage which disrupts the DNA-binding part of LexA, leading to derepression of the SOS regulon and eventually DNA repair. This is LexA repressor from Pseudomonas putida (Arthrobacter siderocapsulatus).